Consider the following 383-residue polypeptide: Alkanesulfonate monooxygenase (383 aa).

Belongs to the SsuD family. Homotetramer.

The enzyme catalyses an alkanesulfonate + FMNH2 + O2 = an aldehyde + FMN + sulfite + H2O + 2 H(+). Its function is as follows. Catalyzes the desulfonation of aliphatic sulfonates. The protein is Alkanesulfonate monooxygenase of Erwinia pyrifoliae (strain DSM 12163 / CIP 106111 / Ep16/96).